The chain runs to 370 residues: tRNA-specific 2-thiouridylase MnmA (370 aa).

Residues 24 to 31 (AMSGGVDS) and leucine 50 each bind ATP. The active-site Nucleophile is the cysteine 119. Cysteine 119 and cysteine 215 are oxidised to a cystine. Position 143 (glycine 143) interacts with ATP. The tract at residues 165-167 (KDQ) is interaction with tRNA. Residue cysteine 215 is the Cysteine persulfide intermediate of the active site.

Belongs to the MnmA/TRMU family.

It localises to the cytoplasm. The catalysed reaction is S-sulfanyl-L-cysteinyl-[protein] + uridine(34) in tRNA + AH2 + ATP = 2-thiouridine(34) in tRNA + L-cysteinyl-[protein] + A + AMP + diphosphate + H(+). Its function is as follows. Catalyzes the 2-thiolation of uridine at the wobble position (U34) of tRNA, leading to the formation of s(2)U34. In Wolbachia sp. subsp. Drosophila simulans (strain wRi), this protein is tRNA-specific 2-thiouridylase MnmA.